Here is a 272-residue protein sequence, read N- to C-terminus: MNRIALGLHYDGAAFSGWQSQPHRNTVQDHLEDAIERFAGVRLLTTVAGRTDAGVHALGQVIHLDTELVREPFSWVRGVNAFLPPSIALQWALPVDVGFHARFLAYERMYYYALYTGPHRVPMVHGRAGYQMLPPGQRLDVEAMRAAAAHLIGEHDFSAFRAAECQAKSPVKTMYDVTIRDDGNWVFLRFRASAFLHHMVRNLMGCLVAVGRRRYPPDWMAQVLAGRDRKLAAPTFMPDGLYLVGVKYPDAYPIPAADPSASLFHGVFDDAA.

Asp52 (nucleophile) is an active-site residue. Tyr110 is a substrate binding site.

This sequence belongs to the tRNA pseudouridine synthase TruA family. Homodimer.

The enzyme catalyses uridine(38/39/40) in tRNA = pseudouridine(38/39/40) in tRNA. In terms of biological role, formation of pseudouridine at positions 38, 39 and 40 in the anticodon stem and loop of transfer RNAs. This is tRNA pseudouridine synthase A from Cupriavidus taiwanensis (strain DSM 17343 / BCRC 17206 / CCUG 44338 / CIP 107171 / LMG 19424 / R1) (Ralstonia taiwanensis (strain LMG 19424)).